The chain runs to 334 residues: N-acetylmuramoyl-L-alanine amidase sle1 (334 aa).

The signal sequence occupies residues 1 to 25; that stretch reads MQKKVIAAIIGTSAISAVAATQANA. The 44-residue stretch at 27 to 70 folds into the LysM 1 domain; that stretch reads TTHTVKPGESVWAISNKYGISIAKLKSLNNLTSNLIFPNQVLKV. A compositionally biased stretch (low complexity) spans 71 to 86; the sequence is SGSSNSTSNSSRPSTN. The interval 71–90 is disordered; sequence SGSSNSTSNSSRPSTNSGGG. Positions 91 to 134 constitute a LysM 2 domain; the sequence is SYYTVQAGDSLSLIASKYGTTYQNIMRLNGLNNFFIYPGQKLKV. Residues 137–156 form a disordered region; it reads TASSSNSTSNSSRPSTNSSG. The LysM 3 domain occupies 158–201; sequence SYYTVQAGDSLSLIASKYGTTYQNIMRLNGLNNFFIYPGQKLKV. The Peptidase C51 domain maps to 210–334; that stretch reads GSTTTTNRGY…YQVNNYRYIH (125 aa).

Its subcellular location is the secreted. The protein resides in the cell surface. The catalysed reaction is Hydrolyzes the link between N-acetylmuramoyl residues and L-amino acid residues in certain cell-wall glycopeptides.. Peptidoglycan hydrolase involved in the splitting of the septum during cell division. This chain is N-acetylmuramoyl-L-alanine amidase sle1 (sle1), found in Staphylococcus aureus (strain MRSA252).